The sequence spans 301 residues: Acetyl-coenzyme A carboxylase carboxyl transferase subunit beta (301 aa).

The region spanning 25-294 (LWIKDPSTGE…NSDAPAPQKP (270 aa)) is the CoA carboxyltransferase N-terminal domain.

It belongs to the AccD/PCCB family. Acetyl-CoA carboxylase is a heterohexamer composed of biotin carboxyl carrier protein (AccB), biotin carboxylase (AccC) and two subunits each of ACCase subunit alpha (AccA) and ACCase subunit beta (AccD).

The protein resides in the cytoplasm. It catalyses the reaction N(6)-carboxybiotinyl-L-lysyl-[protein] + acetyl-CoA = N(6)-biotinyl-L-lysyl-[protein] + malonyl-CoA. The protein operates within lipid metabolism; malonyl-CoA biosynthesis; malonyl-CoA from acetyl-CoA: step 1/1. Functionally, component of the acetyl coenzyme A carboxylase (ACC) complex. Biotin carboxylase (BC) catalyzes the carboxylation of biotin on its carrier protein (BCCP) and then the CO(2) group is transferred by the transcarboxylase to acetyl-CoA to form malonyl-CoA. In Brucella abortus (strain 2308), this protein is Acetyl-coenzyme A carboxylase carboxyl transferase subunit beta.